We begin with the raw amino-acid sequence, 405 residues long: Caspase-1 (405 aa).

Residues 1–91 form the CARD domain; the sequence is MADKVLKEKR…HLAETLRLSS (91 aa). Residues 1 to 119 constitute a propeptide that is removed on maturation; that stretch reads MADKVLKEKR…SSPALQAMPD (119 aa). Catalysis depends on residues histidine 238 and cysteine 286. Positions 299 to 317 are excised as a propeptide; the sequence is STGTSGNSSSLAPDDFEDD. Serine 303 bears the Phosphoserine mark.

Belongs to the peptidase C14A family. As to quaternary structure, heterotetramer that consists of two anti-parallel arranged heterodimers, each one formed by a 20 kDa (Caspase-1 subunit p20) and a 10 kDa (Caspase-1 subunit p10) subunit. May be a component of the inflammasome, a protein complex which also includes PYCARD, CARD8 and NLRP2 and whose function would be the activation of pro-inflammatory caspases. Component of the AIM2 PANoptosome complex, a multiprotein complex that drives inflammatory cell death (PANoptosis). Both the p10 and p20 subunits interact with MEFV. Interacts with CARD17P/INCA and CARD18. Interacts with SERPINB1; this interaction regulates CASP1 activity. In terms of assembly, heterotetramer that consists of two anti-parallel arranged heterodimers, each one formed by a 20 kDa (Caspase-1 subunit p20) and a 10 kDa (Caspase-1 subunit p10) subunit. In terms of processing, the two subunits are derived from the precursor sequence by an autocatalytic mechanism. Ubiquitinated via 'Lys-11'-linked polyubiquitination. Deubiquitinated by USP8.

Its subcellular location is the cytoplasm. It localises to the cell membrane. The enzyme catalyses Strict requirement for an Asp residue at position P1 and has a preferred cleavage sequence of Tyr-Val-Ala-Asp-|-.. In terms of biological role, thiol protease involved in a variety of inflammatory processes by proteolytically cleaving other proteins, such as the precursors of the inflammatory cytokines interleukin-1 beta (IL1B) and interleukin 18 (IL18) as well as the pyroptosis inducer Gasdermin-D (GSDMD), into active mature peptides. Plays a key role in cell immunity as an inflammatory response initiator: once activated through formation of an inflammasome complex, it initiates a pro-inflammatory response through the cleavage of the two inflammatory cytokines IL1B and IL18, releasing the mature cytokines which are involved in a variety of inflammatory processes. Cleaves a tetrapeptide after an Asp residue at position P1. Also initiates pyroptosis, a programmed lytic cell death pathway, through cleavage of GSDMD. In contrast to cleavage of interleukin IL1B, recognition and cleavage of GSDMD is not strictly dependent on the consensus cleavage site but depends on an exosite interface on CASP1 that recognizes and binds the Gasdermin-D, C-terminal (GSDMD-CT) part. Cleaves and activates CASP7 in response to bacterial infection, promoting plasma membrane repair. Upon inflammasome activation, during DNA virus infection but not RNA virus challenge, controls antiviral immunity through the cleavage of CGAS, rendering it inactive. In apoptotic cells, cleaves SPHK2 which is released from cells and remains enzymatically active extracellularly. In Equus caballus (Horse), this protein is Caspase-1 (CASP1).